A 189-amino-acid polypeptide reads, in one-letter code: MNLILFGPPAAGKGTQAKRLVEQRGMVQLSTGDMLRAAIASGSELGQKVKGVLDRGELVTDEIVIALIEDRLPEAEAAGGAIFDGFPRTVPQAQALDAMLARRGQKIDSVLRLKVDEPALIERISKRFAEQGRPDDNPEVFVTRLAAYNAQTAPLLPYYREQGKLTELDGMASVETVAGSIDAALSVVA.

10–15 (AAGKGT) contacts ATP. An NMP region spans residues 30 to 59 (STGDMLRAAIASGSELGQKVKGVLDRGELV). AMP-binding positions include threonine 31, arginine 36, 57–59 (ELV), 85–88 (GFPR), and glutamine 92. An LID region spans residues 126 to 136 (KRFAEQGRPDD). Arginine 127 lines the ATP pocket. The AMP site is built by arginine 133 and arginine 144. Alanine 172 is a binding site for ATP.

This sequence belongs to the adenylate kinase family. In terms of assembly, monomer.

The protein localises to the cytoplasm. It catalyses the reaction AMP + ATP = 2 ADP. It functions in the pathway purine metabolism; AMP biosynthesis via salvage pathway; AMP from ADP: step 1/1. Its function is as follows. Catalyzes the reversible transfer of the terminal phosphate group between ATP and AMP. Plays an important role in cellular energy homeostasis and in adenine nucleotide metabolism. The polypeptide is Adenylate kinase (Caulobacter sp. (strain K31)).